We begin with the raw amino-acid sequence, 473 residues long: Photosystem II CP43 reaction center protein (473 aa).

The propeptide occupies 1-14; it reads MKTLYSLRRFYHVE. An N-acetylthreonine modification is found at Thr15. Thr15 bears the Phosphothreonine mark. 5 helical membrane-spanning segments follow: residues 69–93, 134–155, 178–200, 255–275, and 291–312; these read LFEVAHFVPEKPMYEQGLILLPHLA, LLGPETLEESFPFFGYVWKDRN, KALYFGGVYDTWAPGGGDVRKIT, KPFAWARRALVWSGEAYLSYS, and CFNNTAYPSEFYGPTGPEASQA. Position 367 (Glu367) interacts with [CaMn4O5] cluster. Residues 447–471 traverse the membrane as a helical segment; it reads RARAAAAGFEKGIDRDFEPVLSMTP.

This sequence belongs to the PsbB/PsbC family. PsbC subfamily. As to quaternary structure, PSII is composed of 1 copy each of membrane proteins PsbA, PsbB, PsbC, PsbD, PsbE, PsbF, PsbH, PsbI, PsbJ, PsbK, PsbL, PsbM, PsbT, PsbX, PsbY, PsbZ, Psb30/Ycf12, at least 3 peripheral proteins of the oxygen-evolving complex and a large number of cofactors. It forms dimeric complexes. Binds multiple chlorophylls and provides some of the ligands for the Ca-4Mn-5O cluster of the oxygen-evolving complex. It may also provide a ligand for a Cl- that is required for oxygen evolution. PSII binds additional chlorophylls, carotenoids and specific lipids. serves as cofactor.

Its subcellular location is the plastid. The protein resides in the chloroplast thylakoid membrane. Its function is as follows. One of the components of the core complex of photosystem II (PSII). It binds chlorophyll and helps catalyze the primary light-induced photochemical processes of PSII. PSII is a light-driven water:plastoquinone oxidoreductase, using light energy to abstract electrons from H(2)O, generating O(2) and a proton gradient subsequently used for ATP formation. In Jasminum nudiflorum (Winter jasmine), this protein is Photosystem II CP43 reaction center protein.